We begin with the raw amino-acid sequence, 422 residues long: Gamma-glutamyl phosphate reductase (422 aa).

This sequence belongs to the gamma-glutamyl phosphate reductase family.

It is found in the cytoplasm. It carries out the reaction L-glutamate 5-semialdehyde + phosphate + NADP(+) = L-glutamyl 5-phosphate + NADPH + H(+). It participates in amino-acid biosynthesis; L-proline biosynthesis; L-glutamate 5-semialdehyde from L-glutamate: step 2/2. Functionally, catalyzes the NADPH-dependent reduction of L-glutamate 5-phosphate into L-glutamate 5-semialdehyde and phosphate. The product spontaneously undergoes cyclization to form 1-pyrroline-5-carboxylate. This is Gamma-glutamyl phosphate reductase from Chlorobium phaeovibrioides (strain DSM 265 / 1930) (Prosthecochloris vibrioformis (strain DSM 265)).